We begin with the raw amino-acid sequence, 449 residues long: Probable glucuronosyltransferase 47 A (449 aa).

Topologically, residues 1–31 (MEHPLECADSCSLAMSWFCNKKCRGWGLMKR) are cytoplasmic. A helical; Signal-anchor for type II membrane protein membrane pass occupies residues 32–52 (TVVASGLRSVVLLLLFIYFVQ). Over 53 to 449 (DVTAEMGHQR…GDLYPWGNDL (397 aa)) the chain is Lumenal. Residues asparagine 172 and asparagine 433 are each glycosylated (N-linked (GlcNAc...) asparagine).

Belongs to the glycosyltransferase 47 family. Mostly expressed in newly formed or expanding tissues.

The protein localises to the golgi apparatus membrane. Functionally, involved in the synthesis of glucuronoxylan hemicellulose in secondary cell walls. The protein is Probable glucuronosyltransferase 47 A of Physcomitrium patens (Spreading-leaved earth moss).